The following is a 409-amino-acid chain: Elongation factor Tu, plastid (409 aa).

Residues 10 to 214 (KPHINIGTIG…KIDSYIPTPI (205 aa)) form the tr-type G domain. The tract at residues 19 to 26 (GHVDHGKT) is G1. 19–26 (GHVDHGKT) serves as a coordination point for GTP. Position 26 (T26) interacts with Mg(2+). Positions 60–64 (GITIN) are G2. The segment at 81-84 (DCPG) is G3. Residues 81–85 (DCPGH) and 136–139 (NKED) contribute to the GTP site. The interval 136 to 139 (NKED) is G4. The interval 174 to 176 (SAL) is G5.

This sequence belongs to the TRAFAC class translation factor GTPase superfamily. Classic translation factor GTPase family. EF-Tu/EF-1A subfamily.

Its subcellular location is the plastid. It catalyses the reaction GTP + H2O = GDP + phosphate + H(+). Functionally, GTP hydrolase that promotes the GTP-dependent binding of aminoacyl-tRNA to the A-site of ribosomes during protein biosynthesis. This Euglena longa (Euglenophycean alga) protein is Elongation factor Tu, plastid (tufA).